The primary structure comprises 120 residues: Large ribosomal subunit protein uL18 (120 aa).

Belongs to the universal ribosomal protein uL18 family. Part of the 50S ribosomal subunit; part of the 5S rRNA/L5/L18/L25 subcomplex. Contacts the 5S and 23S rRNAs.

Functionally, this is one of the proteins that bind and probably mediate the attachment of the 5S RNA into the large ribosomal subunit, where it forms part of the central protuberance. This Rhizobium rhizogenes (strain K84 / ATCC BAA-868) (Agrobacterium radiobacter) protein is Large ribosomal subunit protein uL18.